Consider the following 314-residue polypeptide: tRNA pseudouridine synthase B (314 aa).

Residue His43 coordinates substrate. Asp48 acts as the Nucleophile in catalysis. 3 residues coordinate substrate: Tyr76, Tyr179, and Leu200.

Belongs to the pseudouridine synthase TruB family. Type 1 subfamily.

It catalyses the reaction uridine(55) in tRNA = pseudouridine(55) in tRNA. In terms of biological role, responsible for synthesis of pseudouridine from uracil-55 in the psi GC loop of transfer RNAs. The sequence is that of tRNA pseudouridine synthase B from Citrobacter koseri (strain ATCC BAA-895 / CDC 4225-83 / SGSC4696).